The primary structure comprises 155 residues: 6,7-dimethyl-8-ribityllumazine synthase (155 aa).

Residues phenylalanine 22, 57–59 (AVE), and 81–83 (TVI) contribute to the 5-amino-6-(D-ribitylamino)uracil site. A (2S)-2-hydroxy-3-oxobutyl phosphate-binding site is contributed by 86-87 (GT). Histidine 89 functions as the Proton donor in the catalytic mechanism. Phenylalanine 114 is a 5-amino-6-(D-ribitylamino)uracil binding site. Residue arginine 128 coordinates (2S)-2-hydroxy-3-oxobutyl phosphate.

It belongs to the DMRL synthase family. In terms of assembly, forms an icosahedral capsid composed of 60 subunits, arranged as a dodecamer of pentamers.

It catalyses the reaction (2S)-2-hydroxy-3-oxobutyl phosphate + 5-amino-6-(D-ribitylamino)uracil = 6,7-dimethyl-8-(1-D-ribityl)lumazine + phosphate + 2 H2O + H(+). It participates in cofactor biosynthesis; riboflavin biosynthesis; riboflavin from 2-hydroxy-3-oxobutyl phosphate and 5-amino-6-(D-ribitylamino)uracil: step 1/2. Its function is as follows. Catalyzes the formation of 6,7-dimethyl-8-ribityllumazine by condensation of 5-amino-6-(D-ribitylamino)uracil with 3,4-dihydroxy-2-butanone 4-phosphate. This is the penultimate step in the biosynthesis of riboflavin. This is 6,7-dimethyl-8-ribityllumazine synthase from Psychromonas ingrahamii (strain DSM 17664 / CCUG 51855 / 37).